The sequence spans 382 residues: D-galactonate dehydratase (382 aa).

Asp183 contributes to the Mg(2+) binding site. His185 serves as the catalytic Proton donor. Mg(2+) is bound by residues Glu209 and Glu235. His285 acts as the Proton acceptor in catalysis.

The protein belongs to the mandelate racemase/muconate lactonizing enzyme family. GalD subfamily. It depends on Mg(2+) as a cofactor.

It catalyses the reaction D-galactonate = 2-dehydro-3-deoxy-D-galactonate + H2O. Its pathway is carbohydrate acid metabolism; D-galactonate degradation; D-glyceraldehyde 3-phosphate and pyruvate from D-galactonate: step 1/3. Catalyzes the dehydration of D-galactonate to 2-keto-3-deoxy-D-galactonate. In Ralstonia pickettii (strain 12J), this protein is D-galactonate dehydratase.